A 224-amino-acid chain; its full sequence is Holliday junction branch migration complex subunit RuvA (224 aa).

Positions 1 to 67 (MISWLKGEKV…EDGTSLYGFI (67 aa)) are domain I. The tract at residues 68 to 146 (EVNQRDLFRE…RFTDNDKTIH (79 aa)) is domain II. The interval 147–157 (ENKNDIEANQF) is flexible linker. A domain III region spans residues 157 to 224 (FSKYIDEIYL…ILMKLSEKST (68 aa)).

The protein belongs to the RuvA family. As to quaternary structure, homotetramer. Forms an RuvA(8)-RuvB(12)-Holliday junction (HJ) complex. HJ DNA is sandwiched between 2 RuvA tetramers; dsDNA enters through RuvA and exits via RuvB. An RuvB hexamer assembles on each DNA strand where it exits the tetramer. Each RuvB hexamer is contacted by two RuvA subunits (via domain III) on 2 adjacent RuvB subunits; this complex drives branch migration. In the full resolvosome a probable DNA-RuvA(4)-RuvB(12)-RuvC(2) complex forms which resolves the HJ.

Its subcellular location is the cytoplasm. Its function is as follows. The RuvA-RuvB-RuvC complex processes Holliday junction (HJ) DNA during genetic recombination and DNA repair, while the RuvA-RuvB complex plays an important role in the rescue of blocked DNA replication forks via replication fork reversal (RFR). RuvA specifically binds to HJ cruciform DNA, conferring on it an open structure. The RuvB hexamer acts as an ATP-dependent pump, pulling dsDNA into and through the RuvAB complex. HJ branch migration allows RuvC to scan DNA until it finds its consensus sequence, where it cleaves and resolves the cruciform DNA. This is Holliday junction branch migration complex subunit RuvA from Prochlorococcus marinus (strain NATL2A).